We begin with the raw amino-acid sequence, 396 residues long: DNA polymerase IV (396 aa).

The UmuC domain maps to Ile5 to Gly192. 2 residues coordinate Mg(2+): Asp9 and Asp111. Glu112 is a catalytic residue.

Belongs to the DNA polymerase type-Y family. As to quaternary structure, monomer. Requires Mg(2+) as cofactor.

It is found in the cytoplasm. It carries out the reaction DNA(n) + a 2'-deoxyribonucleoside 5'-triphosphate = DNA(n+1) + diphosphate. Functionally, poorly processive, error-prone DNA polymerase involved in untargeted mutagenesis. Copies undamaged DNA at stalled replication forks, which arise in vivo from mismatched or misaligned primer ends. These misaligned primers can be extended by PolIV. Exhibits no 3'-5' exonuclease (proofreading) activity. May be involved in translesional synthesis, in conjunction with the beta clamp from PolIII. The chain is DNA polymerase IV from Clostridium acetobutylicum (strain ATCC 824 / DSM 792 / JCM 1419 / IAM 19013 / LMG 5710 / NBRC 13948 / NRRL B-527 / VKM B-1787 / 2291 / W).